Reading from the N-terminus, the 88-residue chain is Defensin-like protein 267 (88 aa).

A signal peptide spans 1–23; the sequence is MMLSKVVLLALLLSLSCLWVAKA. 3 disulfides stabilise this stretch: Cys45-Cys63, Cys51-Cys68, and Cys55-Cys70.

This sequence belongs to the DEFL family.

Its subcellular location is the secreted. The sequence is that of Defensin-like protein 267 from Arabidopsis thaliana (Mouse-ear cress).